Consider the following 440-residue polypeptide: Dynein axonemal assembly factor 11 (440 aa).

LRR repeat units follow at residues Ile20–Cys43, Arg44–Leu65, Lys66–Ser89, and Leu90–Lys110. The LRRCT domain maps to Tyr128–Asp146. Residues Glu178–Glu192 are compositionally biased toward basic and acidic residues. Disordered regions lie at residues Glu178–Ile267 and Pro363–Met440. The span at Ile193–Ser211 shows a compositional bias: polar residues. Over residues Ser236–Lys259 the composition is skewed to basic and acidic residues. The CS domain occupies Val276 to Thr374. The segment covering Arg369 to Asn378 has biased composition (polar residues). 2 stretches are compositionally biased toward basic and acidic residues: residues Asn379–Leu392 and Gly420–Val431.

This sequence belongs to the tilB family. Interacts with dvl2. Interacts with kur. As to expression, expressed in kinocilia of hair cells.

The protein resides in the cytoplasm. The protein localises to the dynein axonemal particle. Its subcellular location is the cell projection. It is found in the cilium. Its function is as follows. Plays a crucial role in regulating cilia motility in pronephric tubules, cloaca and neural tube. Required for establishing left-right asymmetry of the body plan; controls cell fate and convergent extension (CE) movements during gastrulation, respectively, via the Wnt and the planar cell polarity (PCP) signaling pathways. Required for the proper development of renal glomeruli and tubules. The chain is Dynein axonemal assembly factor 11 (dnaaf11) from Danio rerio (Zebrafish).